Here is a 421-residue protein sequence, read N- to C-terminus: Ubiquitin-like modifier-activating enzyme 5 (421 aa).

ATP is bound by residues G89, D110, K133, N156, and N191. C233 and C236 together coordinate Zn(2+). Residue C257 is the Glycyl thioester intermediate of the active site. Residues C310 and C315 each coordinate Zn(2+).

Belongs to the ubiquitin-activating E1 family. UBA5 subfamily.

E1-like enzyme which activates UFM1. This chain is Ubiquitin-like modifier-activating enzyme 5, found in Oryza sativa subsp. japonica (Rice).